A 312-amino-acid chain; its full sequence is Oxidoreductase NAD-binding domain-containing protein 1 (312 aa).

Positions 1–17 (MACAAVMIPGLLRCSVG) are cleaved as a signal peptide. The 137-residue stretch at 50–186 (HMERTASVLR…GGVGINPLLS (137 aa)) folds into the FAD-binding FR-type domain. 178–183 (GVGINP) contributes to the NAD(+) binding site.

The protein is Oxidoreductase NAD-binding domain-containing protein 1 (OXNAD1) of Homo sapiens (Human).